Consider the following 829-residue polypeptide: Leucine--tRNA ligase (829 aa).

Residues 40 to 50 (PYPSGNIHMGH) carry the 'HIGH' region motif. The 'KMSKS' region signature appears at 581-585 (KMSKS). Position 584 (Lys584) interacts with ATP.

This sequence belongs to the class-I aminoacyl-tRNA synthetase family.

The protein resides in the cytoplasm. The enzyme catalyses tRNA(Leu) + L-leucine + ATP = L-leucyl-tRNA(Leu) + AMP + diphosphate. The chain is Leucine--tRNA ligase from Nitratidesulfovibrio vulgaris (strain DP4) (Desulfovibrio vulgaris).